The primary structure comprises 167 residues: Protein-export protein SecB (167 aa).

Belongs to the SecB family. As to quaternary structure, homotetramer, a dimer of dimers. One homotetramer interacts with 1 SecA dimer.

The protein localises to the cytoplasm. One of the proteins required for the normal export of preproteins out of the cell cytoplasm. It is a molecular chaperone that binds to a subset of precursor proteins, maintaining them in a translocation-competent state. It also specifically binds to its receptor SecA. This is Protein-export protein SecB from Wolbachia sp. subsp. Brugia malayi (strain TRS).